The following is a 111-amino-acid chain: DNA-directed RNA polymerase subunit Rpo11 (111 aa).

This sequence belongs to the archaeal Rpo11/eukaryotic RPB11/RPC19 RNA polymerase subunit family. Part of the RNA polymerase complex.

The protein localises to the cytoplasm. The catalysed reaction is RNA(n) + a ribonucleoside 5'-triphosphate = RNA(n+1) + diphosphate. In terms of biological role, DNA-dependent RNA polymerase (RNAP) catalyzes the transcription of DNA into RNA using the four ribonucleoside triphosphates as substrates. In Thermoplasma volcanium (strain ATCC 51530 / DSM 4299 / JCM 9571 / NBRC 15438 / GSS1), this protein is DNA-directed RNA polymerase subunit Rpo11.